Consider the following 715-residue polypeptide: Fatty acid oxidation complex subunit alpha (715 aa).

The enoyl-CoA hydratase stretch occupies residues 1–190 (MTTTSAFMLN…KAGLVDDVVP (190 aa)). Positions 306–715 (GPLNSVGILG…WTNGETDQGN (410 aa)) are 3-hydroxyacyl-CoA dehydrogenase.

In the N-terminal section; belongs to the enoyl-CoA hydratase/isomerase family. It in the central section; belongs to the 3-hydroxyacyl-CoA dehydrogenase family. Heterotetramer of two alpha chains (FadJ) and two beta chains (FadI).

The protein localises to the cytoplasm. The enzyme catalyses a (3S)-3-hydroxyacyl-CoA = a (2E)-enoyl-CoA + H2O. It carries out the reaction a 4-saturated-(3S)-3-hydroxyacyl-CoA = a (3E)-enoyl-CoA + H2O. It catalyses the reaction a (3S)-3-hydroxyacyl-CoA + NAD(+) = a 3-oxoacyl-CoA + NADH + H(+). The catalysed reaction is (3S)-3-hydroxybutanoyl-CoA = (3R)-3-hydroxybutanoyl-CoA. Its pathway is lipid metabolism; fatty acid beta-oxidation. Its function is as follows. Catalyzes the formation of a hydroxyacyl-CoA by addition of water on enoyl-CoA. Also exhibits 3-hydroxyacyl-CoA epimerase and 3-hydroxyacyl-CoA dehydrogenase activities. The sequence is that of Fatty acid oxidation complex subunit alpha from Salmonella newport (strain SL254).